The sequence spans 394 residues: Elongation factor Tu (394 aa).

The 195-residue stretch at Lys10–Glu204 folds into the tr-type G domain. The segment at Gly19–Thr26 is G1. Residue Gly19–Thr26 participates in GTP binding. Thr26 serves as a coordination point for Mg(2+). Positions Gly60–Asn64 are G2. The G3 stretch occupies residues Asp81 to Gly84. Residues Asp81 to His85 and Asn136 to Asp139 contribute to the GTP site. The interval Asn136–Asp139 is G4. The interval Ser174–Leu176 is G5.

The protein belongs to the TRAFAC class translation factor GTPase superfamily. Classic translation factor GTPase family. EF-Tu/EF-1A subfamily. Monomer.

Its subcellular location is the cytoplasm. It catalyses the reaction GTP + H2O = GDP + phosphate + H(+). Its function is as follows. GTP hydrolase that promotes the GTP-dependent binding of aminoacyl-tRNA to the A-site of ribosomes during protein biosynthesis. This chain is Elongation factor Tu, found in Actinobacillus pleuropneumoniae serotype 5b (strain L20).